Consider the following 402-residue polypeptide: Enoyl-[acyl-carrier-protein] reductase [NADH] (402 aa).

NAD(+) contacts are provided by residues 48–53 (GASSGY), 74–75 (FE), 111–112 (DA), and 140–141 (LA). Y226 contributes to the substrate binding site. The active-site Proton donor is Y236. NAD(+)-binding positions include K245 and 274-276 (VVT).

It belongs to the TER reductase family. In terms of assembly, monomer.

The enzyme catalyses a 2,3-saturated acyl-[ACP] + NAD(+) = a (2E)-enoyl-[ACP] + NADH + H(+). Its pathway is lipid metabolism; fatty acid biosynthesis. Involved in the final reduction of the elongation cycle of fatty acid synthesis (FAS II). Catalyzes the reduction of a carbon-carbon double bond in an enoyl moiety that is covalently linked to an acyl carrier protein (ACP). The chain is Enoyl-[acyl-carrier-protein] reductase [NADH] from Xanthomonas axonopodis pv. citri (strain 306).